Reading from the N-terminus, the 216-residue chain is Ras-related protein RABA1a (216 aa).

A GTP-binding site is contributed by 20 to 27; the sequence is GDSGVGKS. An Effector region motif is present at residues 42 to 50; the sequence is SKSTIGVEF. Residues 68 to 72, 126 to 129, and 156 to 157 contribute to the GTP site; these read DTAGQ, NKCD, and SA. Residues Cys213 and Cys214 are each lipidated (S-geranylgeranyl cysteine).

It belongs to the small GTPase superfamily. Rab family.

The protein localises to the cell membrane. Functionally, involved in auxin-mediated response. May be involved in vesicle trafficking of components involved in polar auxin transport. Binds GTP and GDP and possesses intrinsic GTPase activity. This Arabidopsis thaliana (Mouse-ear cress) protein is Ras-related protein RABA1a (RABA1A).